Consider the following 616-residue polypeptide: Chaperone protein HscA (616 aa).

The protein belongs to the heat shock protein 70 family.

In terms of biological role, chaperone involved in the maturation of iron-sulfur cluster-containing proteins. Has a low intrinsic ATPase activity which is markedly stimulated by HscB. Involved in the maturation of IscU. The polypeptide is Chaperone protein HscA (Enterobacter sp. (strain 638)).